The following is a 496-amino-acid chain: UDP-N-acetylmuramate--L-alanine ligase (496 aa).

122 to 128 is a binding site for ATP; it reads GTHGKTT.

This sequence belongs to the MurCDEF family.

It is found in the cytoplasm. It catalyses the reaction UDP-N-acetyl-alpha-D-muramate + L-alanine + ATP = UDP-N-acetyl-alpha-D-muramoyl-L-alanine + ADP + phosphate + H(+). It functions in the pathway cell wall biogenesis; peptidoglycan biosynthesis. Its function is as follows. Cell wall formation. The polypeptide is UDP-N-acetylmuramate--L-alanine ligase (Mycolicibacterium paratuberculosis (strain ATCC BAA-968 / K-10) (Mycobacterium paratuberculosis)).